We begin with the raw amino-acid sequence, 594 residues long: Protein FAM200C (594 aa).

The chain is Protein FAM200C (FAM200C) from Bos taurus (Bovine).